The sequence spans 439 residues: Ribosomal protein uS12 methylthiotransferase RimO (439 aa).

An MTTase N-terminal domain is found at 3–115 (KKLHLISLGC…IDQMVRERQG (113 aa)). Cys-12, Cys-46, Cys-78, Cys-147, Cys-151, and Cys-154 together coordinate [4Fe-4S] cluster. In terms of domain architecture, Radical SAM core spans 133-362 (TGSSVHAYVK…DKIIQKQHRA (230 aa)).

The protein belongs to the methylthiotransferase family. RimO subfamily. [4Fe-4S] cluster is required as a cofactor.

It is found in the cytoplasm. The enzyme catalyses L-aspartate(89)-[ribosomal protein uS12]-hydrogen + (sulfur carrier)-SH + AH2 + 2 S-adenosyl-L-methionine = 3-methylsulfanyl-L-aspartate(89)-[ribosomal protein uS12]-hydrogen + (sulfur carrier)-H + 5'-deoxyadenosine + L-methionine + A + S-adenosyl-L-homocysteine + 2 H(+). Catalyzes the methylthiolation of an aspartic acid residue of ribosomal protein uS12. The sequence is that of Ribosomal protein uS12 methylthiotransferase RimO from Wolinella succinogenes (strain ATCC 29543 / DSM 1740 / CCUG 13145 / JCM 31913 / LMG 7466 / NCTC 11488 / FDC 602W) (Vibrio succinogenes).